A 327-amino-acid chain; its full sequence is Probable cell division protein WhiA (327 aa).

Residues Ser-275 to Lys-308 constitute a DNA-binding region (H-T-H motif). Residues Lys-306–Ala-327 form a disordered region.

The protein belongs to the WhiA family.

In terms of biological role, involved in cell division and chromosome segregation. The sequence is that of Probable cell division protein WhiA from Rhodococcus jostii (strain RHA1).